We begin with the raw amino-acid sequence, 139 residues long: Large ribosomal subunit protein uL22 (139 aa).

Residues 118–139 form a disordered region; sequence VEVESRPKKVASKSKSQKGSAR. The span at 125–139 shows a compositional bias: basic residues; the sequence is KKVASKSKSQKGSAR.

Belongs to the universal ribosomal protein uL22 family. Part of the 50S ribosomal subunit.

Functionally, this protein binds specifically to 23S rRNA; its binding is stimulated by other ribosomal proteins, e.g. L4, L17, and L20. It is important during the early stages of 50S assembly. It makes multiple contacts with different domains of the 23S rRNA in the assembled 50S subunit and ribosome. The globular domain of the protein is located near the polypeptide exit tunnel on the outside of the subunit, while an extended beta-hairpin is found that lines the wall of the exit tunnel in the center of the 70S ribosome. The protein is Large ribosomal subunit protein uL22 of Saccharopolyspora erythraea (strain ATCC 11635 / DSM 40517 / JCM 4748 / NBRC 13426 / NCIMB 8594 / NRRL 2338).